The following is a 344-amino-acid chain: DNA-directed RNA polymerase subunit alpha (344 aa).

Residues 1 to 238 (MKVIKTAPLI…KQLGVFGERP (238 aa)) form an alpha N-terminal domain (alpha-NTD) region. The alpha C-terminal domain (alpha-CTD) stretch occupies residues 253-344 (DAKDLSAKIE…EKLEDKGGND (92 aa)).

It belongs to the RNA polymerase alpha chain family. In terms of assembly, homodimer. The RNAP catalytic core consists of 2 alpha, 1 beta, 1 beta' and 1 omega subunit. When a sigma factor is associated with the core the holoenzyme is formed, which can initiate transcription.

It catalyses the reaction RNA(n) + a ribonucleoside 5'-triphosphate = RNA(n+1) + diphosphate. Its function is as follows. DNA-dependent RNA polymerase catalyzes the transcription of DNA into RNA using the four ribonucleoside triphosphates as substrates. In Helicobacter pylori (strain HPAG1), this protein is DNA-directed RNA polymerase subunit alpha.